The sequence spans 41 residues: M-factor (41 aa).

The tract at residues 1–25 (MDSMANTVSSSVVNTGNKPSETLNK) is disordered. Positions 1–29 (MDSMANTVSSSVVNTGNKPSETLNKTVKN) are excised as a propeptide. Cysteine methyl ester is present on C38. C38 carries the S-farnesyl cysteine lipid modification. A propeptide spans 39–41 (VIA) (removed in mature form).

It localises to the secreted. M-factor is a mating pheromone produced by M-type mating cells. All three mfm genes contribute to the production of M-factor. In Schizosaccharomyces pombe (strain 972 / ATCC 24843) (Fission yeast), this protein is M-factor (mfm3).